Here is a 142-residue protein sequence, read N- to C-terminus: Natriuretic peptides A (142 aa).

Residues 1–23 (MMLKTVIYTGVLFLICNKVLVRA) form the signal peptide. A propeptide spanning residues 24–112 (DPLYSPYSSK…RLRDLLMAPR (89 aa)) is cleaved from the precursor. The segment at 47–123 (DTLGQDEGND…NRGSSGCFGS (77 aa)) is disordered. Residues 77 to 94 (WDRERERQWPASDYKKPQ) are compositionally biased toward basic and acidic residues. An intrachain disulfide couples Cys120 to Cys136.

This sequence belongs to the natriuretic peptide family. Cleaved upon secretion to produce the functional hormone. As to expression, expressed in heart atrium and to a lower extent in heart ventricle, but not in brain.

The protein localises to the secreted. Its function is as follows. Hormone playing a key role in cardiovascular homeostasis through regulation of natriuresis, diuresis, and vasodilation. Has a cGMP-stimulating activity. The sequence is that of Natriuretic peptides A (nppa) from Acipenser transmontanus (White sturgeon).